The sequence spans 307 residues: Aspartate carbamoyltransferase catalytic subunit (307 aa).

Residues R54 and T55 each contribute to the carbamoyl phosphate site. Position 83 (K83) interacts with L-aspartate. Residues R104, H132, and Q135 each coordinate carbamoyl phosphate. Positions 165 and 228 each coordinate L-aspartate. Positions 267 and 268 each coordinate carbamoyl phosphate.

The protein belongs to the aspartate/ornithine carbamoyltransferase superfamily. ATCase family. In terms of assembly, heterododecamer (2C3:3R2) of six catalytic PyrB chains organized as two trimers (C3), and six regulatory PyrI chains organized as three dimers (R2).

The enzyme catalyses carbamoyl phosphate + L-aspartate = N-carbamoyl-L-aspartate + phosphate + H(+). The protein operates within pyrimidine metabolism; UMP biosynthesis via de novo pathway; (S)-dihydroorotate from bicarbonate: step 2/3. In terms of biological role, catalyzes the condensation of carbamoyl phosphate and aspartate to form carbamoyl aspartate and inorganic phosphate, the committed step in the de novo pyrimidine nucleotide biosynthesis pathway. The chain is Aspartate carbamoyltransferase catalytic subunit from Clostridium botulinum (strain ATCC 19397 / Type A).